We begin with the raw amino-acid sequence, 436 residues long: MFDSTLNPLWQRYILAVQEEVKPALGCTEPISLALAAAVAAAELEGPVERVEAWVSPNLMKNGLGVTVPGTGMVGLPIAAALGALGGNANAGLEVLKDATAQAIADAKALLAAGKVSVKIQEPCDEILFSRAKVWNGEKWACVTIVGGHTNIVHIETHDGVVFTQQACVAEGEQESPLTVLSRTTLAEILKFVNEVPFAAIRFILDSAKLNCALSQEGLSGKWGLHIGATLEKQCERGLLAKDLSSSIVIRTSAASDARMGGATLPAMSNSGSGNQGITATMPVVVVAEHFGADDERLARALMLSHLSAIYIHNQLPRLSALCAATTAAMGAAAGMAWLVDGRYETISMAISSMIGDVSGMICDGASNSCAMKVSTSASAAWKAVLMALDDTAVTGNEGIVAHDVEQSIANLCALASHSMQQTDRQIIEIMASKAR.

The protein belongs to the UPF0597 family.

This is UPF0597 protein YhaM from Escherichia coli (strain K12 / MC4100 / BW2952).